The following is an 81-amino-acid chain: RBAK downstream neighbor protein (81 aa).

The N-terminal stretch at 1–22 is a signal peptide; the sequence is MWPPLLLLLLLLPAAPVPTAKA.

It is found in the secreted. This is RBAK downstream neighbor protein (RBAKDN) from Homo sapiens (Human).